The sequence spans 340 residues: Phosphoribosylformylglycinamidine cyclo-ligase (340 aa).

It belongs to the AIR synthase family.

It localises to the cytoplasm. The enzyme catalyses 2-formamido-N(1)-(5-O-phospho-beta-D-ribosyl)acetamidine + ATP = 5-amino-1-(5-phospho-beta-D-ribosyl)imidazole + ADP + phosphate + H(+). Its pathway is purine metabolism; IMP biosynthesis via de novo pathway; 5-amino-1-(5-phospho-D-ribosyl)imidazole from N(2)-formyl-N(1)-(5-phospho-D-ribosyl)glycinamide: step 2/2. The polypeptide is Phosphoribosylformylglycinamidine cyclo-ligase (Streptococcus pneumoniae (strain 70585)).